We begin with the raw amino-acid sequence, 262 residues long: MTRKTLAIEGLTATTVIDGQQRVLVDNLSLGVQRGRILALVGASGSGKSMTCSAALGVLPPGVTASRGRVTIDGVPYAANALRGRHVATIMQNPRSAFNPVRTMRDHAIETLQALGKLSSNPQDQIVHCMRAAGLEDVKTILSLHPFEMSGGMLQRMMIALALLSEAPFLFADEPTTDLDLVVQLRVLELLEKLVEERDLGILLVTHDMGVVARLAHDVAVLDHGRLIEQAPVMDIFQTPGHEVTRMLVSAHLSLYGMELNA.

The 244-residue stretch at 6–249 folds into the ABC transporter domain; it reads LAIEGLTATT…PGHEVTRMLV (244 aa). ATP is bound at residue 42-49; the sequence is GASGSGKS.

It belongs to the ABC transporter superfamily. Nickel importer (TC 3.A.1.5.3) family. The complex is composed of two ATP-binding proteins (NikD and NikE), two transmembrane proteins (NikB and NikC) and a solute-binding protein (NikA).

Its subcellular location is the cell inner membrane. The enzyme catalyses Ni(2+)(out) + ATP + H2O = Ni(2+)(in) + ADP + phosphate + H(+). Functionally, part of the ABC transporter complex NikABCDE involved in nickel import. Responsible for energy coupling to the transport system. The polypeptide is Nickel import ATP-binding protein NikD (Brucella abortus biovar 1 (strain 9-941)).